Reading from the N-terminus, the 358-residue chain is DnaJ homolog subfamily B member 11 (358 aa).

Residues 1-22 (MAPQNLSTFCLLLLYLIGAVIA) form the signal peptide. The J domain occupies 25–90 (DFYKILGVPR…EKRKQYDTYG (66 aa)). Position 188 is a phosphothreonine (Thr-188). N-linked (GlcNAc...) asparagine glycosylation is present at Asn-261.

As to quaternary structure, part of a large chaperone multiprotein complex comprising DNAJB11, HSP90B1, HSPA5, HYOU, PDIA2, PDIA4, PDIA6, PPIB, SDF2L1, UGGT1 and very small amounts of ERP29, but not, or at very low levels, CALR nor CANX. Binds to denatured substrates in an ATP-independent manner. Interacts via the J domain with HSPA5 in an ATP-dependent manner. Contains high-mannose Endo H-sensitive carbohydrates. Post-translationally, cys-169, Cys-171, Cys-193 and Cys-196 form intramolecular disulfide bonds. The preferential partner for each Cys is not known.

Its subcellular location is the endoplasmic reticulum lumen. In terms of biological role, as a co-chaperone for HSPA5 it is required for proper folding, trafficking or degradation of proteins. Binds directly to both unfolded proteins that are substrates for ERAD and nascent unfolded peptide chains, but dissociates from the HSPA5-unfolded protein complex before folding is completed. May help recruiting HSPA5 and other chaperones to the substrate. Stimulates HSPA5 ATPase activity. It is necessary for maturation and correct trafficking of PKD1. This is DnaJ homolog subfamily B member 11 (Dnajb11) from Rattus norvegicus (Rat).